Here is a 64-residue protein sequence, read N- to C-terminus: Small ribosomal subunit protein eS17 (64 aa).

It belongs to the eukaryotic ribosomal protein eS17 family.

The chain is Small ribosomal subunit protein eS17 from Methanococcoides burtonii (strain DSM 6242 / NBRC 107633 / OCM 468 / ACE-M).